A 505-amino-acid polypeptide reads, in one-letter code: Maturase K (505 aa).

Belongs to the intron maturase 2 family. MatK subfamily.

It localises to the plastid. Its subcellular location is the chloroplast. Its function is as follows. Usually encoded in the trnK tRNA gene intron. Probably assists in splicing its own and other chloroplast group II introns. This Morus indica (Mulberry) protein is Maturase K.